Reading from the N-terminus, the 154-residue chain is Deoxyuridine 5'-triphosphate nucleotidohydrolase (154 aa).

Residues 64–66 (RSG), Asn77, 81–83 (TID), and Lys91 contribute to the substrate site.

This sequence belongs to the dUTPase family. As to quaternary structure, homotrimer. Mg(2+) serves as cofactor.

It catalyses the reaction dUTP + H2O = dUMP + diphosphate + H(+). Its pathway is pyrimidine metabolism; dUMP biosynthesis; dUMP from dCTP (dUTP route): step 2/2. This enzyme is involved in nucleotide metabolism: it produces dUMP, the immediate precursor of thymidine nucleotides and it decreases the intracellular concentration of dUTP so that uracil cannot be incorporated into DNA. The polypeptide is Deoxyuridine 5'-triphosphate nucleotidohydrolase (Mycobacterium bovis (strain BCG / Pasteur 1173P2)).